We begin with the raw amino-acid sequence, 544 residues long: MAKRIIYNENARRALERGIDILAEAVAVTLGPKGRNVVLEKKFGAPQIVNDGVTIAKEIELEDHIENTGVALIRQAASKTNDAAGDGTTTATVLAHAIVKEGLRNVAAGANAILLKRGIDKATGFLVDRIKEHARPVEDSKSIAQVGSISAGNDDEVGQMIAEAMDKVGKEGVISLEEGKSVTTELEITEGMRFDKGYISPYFATDPERMEAIFDEPFLLLTDKKIALVQDLVPVLEQVARAGRPLVIIAEDIEKEALATLVVNRLRGVLNVAAVKAPGFGDRRKAMLEDIAILTGGQLITEDAGLKLENTKLESLGKARRITITKDSTTIVAEGNDVAVKGRVEQIRRQMEETESSYDKEKLQERLAKLSGGVAVVKVGAATETEMKDKKLRLEDAINATKAAVEEGIVPGGGTTLAHLTPELEVWANSNLKDEELTGALIVARALPAPLKRIAENAGQNGAVIAERVKEKAFNVGFNAATNEFVDMFEAGIVDPAKVTRSALQNAASIAGMVLTTECIVVDKPEPKDAAPAGAGAGGGDFDY.

Residues 29–32 (TLGP), 86–90 (DGTTT), G413, 479–481 (NAA), and D495 contribute to the ATP site.

The protein belongs to the chaperonin (HSP60) family. As to quaternary structure, forms a cylinder of 14 subunits composed of two heptameric rings stacked back-to-back. Interacts with the co-chaperonin GroES.

It is found in the cytoplasm. It carries out the reaction ATP + H2O + a folded polypeptide = ADP + phosphate + an unfolded polypeptide.. Its function is as follows. Together with its co-chaperonin GroES, plays an essential role in assisting protein folding. The GroEL-GroES system forms a nano-cage that allows encapsulation of the non-native substrate proteins and provides a physical environment optimized to promote and accelerate protein folding. The chain is Chaperonin GroEL 1 from Trichormus variabilis (strain ATCC 29413 / PCC 7937) (Anabaena variabilis).